A 214-amino-acid chain; its full sequence is Phosphoenolpyruvate guanylyltransferase (214 aa).

3 residues coordinate phosphoenolpyruvate: Thr139, Gly155, and Ser158.

Belongs to the CofC family.

The catalysed reaction is phosphoenolpyruvate + GTP + H(+) = enolpyruvoyl-2-diphospho-5'-guanosine + diphosphate. Its pathway is cofactor biosynthesis; coenzyme F420 biosynthesis. Functionally, guanylyltransferase that catalyzes the activation of phosphoenolpyruvate (PEP) as enolpyruvoyl-2-diphospho-5'-guanosine, via the condensation of PEP with GTP. It is involved in the biosynthesis of coenzyme F420, a hydride carrier cofactor. This is Phosphoenolpyruvate guanylyltransferase from Salinispora arenicola (strain CNS-205).